A 209-amino-acid polypeptide reads, in one-letter code: Ribosomal RNA small subunit methyltransferase G (209 aa).

Residues Gly71, Phe76, 122 to 123 (AE), and Arg135 contribute to the S-adenosyl-L-methionine site.

The protein belongs to the methyltransferase superfamily. RNA methyltransferase RsmG family.

It localises to the cytoplasm. Functionally, specifically methylates the N7 position of a guanine in 16S rRNA. This is Ribosomal RNA small subunit methyltransferase G from Phocaeicola vulgatus (strain ATCC 8482 / DSM 1447 / JCM 5826 / CCUG 4940 / NBRC 14291 / NCTC 11154) (Bacteroides vulgatus).